Reading from the N-terminus, the 571-residue chain is Proline--tRNA ligase (571 aa).

Belongs to the class-II aminoacyl-tRNA synthetase family. ProS type 1 subfamily. Homodimer.

The protein resides in the cytoplasm. The catalysed reaction is tRNA(Pro) + L-proline + ATP = L-prolyl-tRNA(Pro) + AMP + diphosphate. Catalyzes the attachment of proline to tRNA(Pro) in a two-step reaction: proline is first activated by ATP to form Pro-AMP and then transferred to the acceptor end of tRNA(Pro). As ProRS can inadvertently accommodate and process non-cognate amino acids such as alanine and cysteine, to avoid such errors it has two additional distinct editing activities against alanine. One activity is designated as 'pretransfer' editing and involves the tRNA(Pro)-independent hydrolysis of activated Ala-AMP. The other activity is designated 'posttransfer' editing and involves deacylation of mischarged Ala-tRNA(Pro). The misacylated Cys-tRNA(Pro) is not edited by ProRS. The protein is Proline--tRNA ligase of Pseudomonas putida (strain W619).